We begin with the raw amino-acid sequence, 339 residues long: Lipoyl synthase (339 aa).

The disordered stretch occupies residues 13–35; it reads RPKLDAPARPRHPEKAHRPDTAI. The [4Fe-4S] cluster site is built by cysteine 68, cysteine 73, cysteine 79, cysteine 94, cysteine 98, cysteine 101, and serine 307. Residues 80–296 form the Radical SAM core domain; sequence WEKRHATFMI…ETTAYAKGFL (217 aa).

This sequence belongs to the radical SAM superfamily. Lipoyl synthase family. Requires [4Fe-4S] cluster as cofactor.

Its subcellular location is the cytoplasm. It carries out the reaction [[Fe-S] cluster scaffold protein carrying a second [4Fe-4S](2+) cluster] + N(6)-octanoyl-L-lysyl-[protein] + 2 oxidized [2Fe-2S]-[ferredoxin] + 2 S-adenosyl-L-methionine + 4 H(+) = [[Fe-S] cluster scaffold protein] + N(6)-[(R)-dihydrolipoyl]-L-lysyl-[protein] + 4 Fe(3+) + 2 hydrogen sulfide + 2 5'-deoxyadenosine + 2 L-methionine + 2 reduced [2Fe-2S]-[ferredoxin]. It participates in protein modification; protein lipoylation via endogenous pathway; protein N(6)-(lipoyl)lysine from octanoyl-[acyl-carrier-protein]: step 2/2. Its function is as follows. Catalyzes the radical-mediated insertion of two sulfur atoms into the C-6 and C-8 positions of the octanoyl moiety bound to the lipoyl domains of lipoate-dependent enzymes, thereby converting the octanoylated domains into lipoylated derivatives. This Methylorubrum extorquens (strain PA1) (Methylobacterium extorquens) protein is Lipoyl synthase.